Reading from the N-terminus, the 149-residue chain is Transcriptional repressor NrdR (149 aa).

A zinc finger spans residues 3 to 34 (CPFCSIQETKVIDSRLVADGHQVRRRRECTMC). An ATP-cone domain is found at 49–139 (PRVVKRDGSR…VYRSFEDIRE (91 aa)).

Belongs to the NrdR family. Requires Zn(2+) as cofactor.

Functionally, negatively regulates transcription of bacterial ribonucleotide reductase nrd genes and operons by binding to NrdR-boxes. In Pseudoalteromonas atlantica (strain T6c / ATCC BAA-1087), this protein is Transcriptional repressor NrdR.